The chain runs to 377 residues: MAIKVLVVDDSSFFRRRVSEIINSESRLEVIDVAVNGKEAVEKAARLKPDVITMDIEMPVMDGISAVREIMANNPVPILMFSSLTHDGAKATLDALDAGALDFLPKKFEDIARNRDEAVTLLQQRVLSIASKKMFLRRPAAPRPAPTTSIAASSSLSQERAAATSPLGNRPSTAVSAATRFKASGKKYQLTAIGTSTGGPVALQKILTKLPVNYPHPIVLIQHMPATFTAAFASRLNSLCKIEVKEAEDGDMLRPGVAYLAPGGKQMMLDGRPGAARLRIIDGGDRMNYKPCVDVTFGSAAKIFGDKVLSMILTGMGADGREGARMLKQAGATIWAQDEESCVVYGMPQAVAKAGISTEDLPLERIAERMLVEVGLA.

The Response regulatory domain maps to 4 to 121; sequence KVLVVDDSSF…ARNRDEAVTL (118 aa). 4-aspartylphosphate is present on Asp55. Residues 138–170 are disordered; it reads RPAAPRPAPTTSIAASSSLSQERAAATSPLGNR. A compositionally biased stretch (low complexity) spans 146–157; that stretch reads PTTSIAASSSLS. A CheB-type methylesterase domain is found at 184-377; it reads SGKKYQLTAI…ERMLVEVGLA (194 aa). Residues Ser196, His223, and Asp319 contribute to the active site.

Belongs to the CheB family. Post-translationally, phosphorylated by CheA. Phosphorylation of the N-terminal regulatory domain activates the methylesterase activity.

The protein resides in the cytoplasm. It carries out the reaction [protein]-L-glutamate 5-O-methyl ester + H2O = L-glutamyl-[protein] + methanol + H(+). It catalyses the reaction L-glutaminyl-[protein] + H2O = L-glutamyl-[protein] + NH4(+). Involved in chemotaxis. Part of a chemotaxis signal transduction system that modulates chemotaxis in response to various stimuli. Catalyzes the demethylation of specific methylglutamate residues introduced into the chemoreceptors (methyl-accepting chemotaxis proteins or MCP) by CheR. Also mediates the irreversible deamidation of specific glutamine residues to glutamic acid. This chain is Protein-glutamate methylesterase/protein-glutamine glutaminase 1, found in Vibrio cholerae serotype O1 (strain ATCC 39315 / El Tor Inaba N16961).